The sequence spans 466 residues: Ribulose bisphosphate carboxylase large chain (466 aa).

Lys5 carries the post-translational modification N6,N6,N6-trimethyllysine. Substrate contacts are provided by Asn114 and Thr164. The active-site Proton acceptor is Lys166. Lys168 lines the substrate pocket. Residues Lys192, Asp194, and Glu195 each contribute to the Mg(2+) site. The residue at position 192 (Lys192) is an N6-carboxylysine. The Proton acceptor role is filled by His285. Residues Arg286, His318, and Ser370 each coordinate substrate.

The protein belongs to the RuBisCO large chain family. Type I subfamily. As to quaternary structure, heterohexadecamer of 8 large chains and 8 small chains; disulfide-linked. The disulfide link is formed within the large subunit homodimers. Mg(2+) serves as cofactor. The disulfide bond which can form in the large chain dimeric partners within the hexadecamer appears to be associated with oxidative stress and protein turnover.

It localises to the plastid. The protein localises to the chloroplast. The catalysed reaction is 2 (2R)-3-phosphoglycerate + 2 H(+) = D-ribulose 1,5-bisphosphate + CO2 + H2O. The enzyme catalyses D-ribulose 1,5-bisphosphate + O2 = 2-phosphoglycolate + (2R)-3-phosphoglycerate + 2 H(+). RuBisCO catalyzes two reactions: the carboxylation of D-ribulose 1,5-bisphosphate, the primary event in carbon dioxide fixation, as well as the oxidative fragmentation of the pentose substrate in the photorespiration process. Both reactions occur simultaneously and in competition at the same active site. The protein is Ribulose bisphosphate carboxylase large chain of Tropaeolum majus (Common nasturtium).